A 545-amino-acid chain; its full sequence is Chaperonin GroEL (545 aa).

ATP is bound by residues 30–33 (TLGP), Lys51, 87–91 (DGTTT), Gly415, and Asp495.

It belongs to the chaperonin (HSP60) family. Forms a cylinder of 14 subunits composed of two heptameric rings stacked back-to-back. Interacts with the co-chaperonin GroES.

It localises to the cytoplasm. The catalysed reaction is ATP + H2O + a folded polypeptide = ADP + phosphate + an unfolded polypeptide.. Functionally, together with its co-chaperonin GroES, plays an essential role in assisting protein folding. The GroEL-GroES system forms a nano-cage that allows encapsulation of the non-native substrate proteins and provides a physical environment optimized to promote and accelerate protein folding. The protein is Chaperonin GroEL of Shewanella denitrificans (strain OS217 / ATCC BAA-1090 / DSM 15013).